We begin with the raw amino-acid sequence, 157 residues long: XylDLEGF operon transcriptional activator 2 (157 aa).

Residues 39 to 140 (ERVVQFIEEN…GELPSDTLSL (102 aa)) form the HTH araC/xylS-type domain. 2 consecutive DNA-binding regions (H-T-H motif) follow at residues 56–77 (EQLA…EKHT) and 107–130 (ITEV…RSTF).

It is found in the cytoplasm. Functionally, regulatory protein of the TOL plasmid xyl operons. XylS activates the xylXYZLTEGFJQKIH operon required for the degradation of toluene, m-xylene and p-xylene. In Pseudomonas putida (Arthrobacter siderocapsulatus), this protein is XylDLEGF operon transcriptional activator 2 (xylS2).